The chain runs to 319 residues: Beta-sarcoglycan (319 aa).

The segment covering 1–10 has biased composition (low complexity); sequence MAAAAAAAAA. The disordered stretch occupies residues 1 to 33; that stretch reads MAAAAAAAAAEQQSSNGPVKKSMREKAVERRNV. Over 1-66 the chain is Cytoplasmic; sequence MAAAAAAAAA…GLRGRKGNLA (66 aa). The segment covering 22–33 has biased composition (basic and acidic residues); sequence SMREKAVERRNV. The helical; Signal-anchor for type II membrane protein transmembrane segment at 67–87 threads the bilayer; it reads ICVIILLFILAVINLIITLVI. Over 88-318 the chain is Extracellular; the sequence is WAVIRIGPNG…QISDNPCGNT (231 aa). N-linked (GlcNAc...) asparagine glycosylation is found at Asn159, Asn212, and Asn259. 2 disulfides stabilise this stretch: Cys289–Cys315 and Cys291–Cys308.

Belongs to the sarcoglycan beta/delta/gamma/zeta family. As to quaternary structure, cross-link to form 2 major subcomplexes: one consisting of SGCB, SGCD and SGCG and the other consisting of SGCB and SGCD. The association between SGCB and SGCG is particularly strong while SGCA is loosely associated with the other sarcoglycans. Disulfide bonds are present.

The protein resides in the cell membrane. The protein localises to the sarcolemma. It is found in the cytoplasm. It localises to the cytoskeleton. Its function is as follows. Component of the sarcoglycan complex, a subcomplex of the dystrophin-glycoprotein complex which forms a link between the F-actin cytoskeleton and the extracellular matrix. This Pongo abelii (Sumatran orangutan) protein is Beta-sarcoglycan (SGCB).